Here is a 101-residue protein sequence, read N- to C-terminus: ATP-dependent Clp protease adapter protein ClpS 1 (101 aa).

This sequence belongs to the ClpS family. Binds to the N-terminal domain of the chaperone ClpA.

Its function is as follows. Involved in the modulation of the specificity of the ClpAP-mediated ATP-dependent protein degradation. The sequence is that of ATP-dependent Clp protease adapter protein ClpS 1 from Bradyrhizobium diazoefficiens (strain JCM 10833 / BCRC 13528 / IAM 13628 / NBRC 14792 / USDA 110).